Reading from the N-terminus, the 449-residue chain is Probable glycine dehydrogenase (decarboxylating) subunit 1 (449 aa).

This sequence belongs to the GcvP family. N-terminal subunit subfamily. In terms of assembly, the glycine cleavage system is composed of four proteins: P, T, L and H. In this organism, the P 'protein' is a heterodimer of two subunits.

The enzyme catalyses N(6)-[(R)-lipoyl]-L-lysyl-[glycine-cleavage complex H protein] + glycine + H(+) = N(6)-[(R)-S(8)-aminomethyldihydrolipoyl]-L-lysyl-[glycine-cleavage complex H protein] + CO2. In terms of biological role, the glycine cleavage system catalyzes the degradation of glycine. The P protein binds the alpha-amino group of glycine through its pyridoxal phosphate cofactor; CO(2) is released and the remaining methylamine moiety is then transferred to the lipoamide cofactor of the H protein. This chain is Probable glycine dehydrogenase (decarboxylating) subunit 1, found in Sulfurisphaera tokodaii (strain DSM 16993 / JCM 10545 / NBRC 100140 / 7) (Sulfolobus tokodaii).